The sequence spans 1128 residues: DNA-directed RNA polymerase subunit Rpo2 (1128 aa).

DsDNA contacts are provided by residues Lys178, 181–182 (SN), Lys206, 435–439 (RGQPN), and 1027–1032 (RFGEME). Zn(2+) contacts are provided by Cys1061, Cys1064, Cys1079, and His1082.

It belongs to the RNA polymerase beta chain family. As to quaternary structure, part of the 13-subunit RNA polymerase complex. It depends on Zn(2+) as a cofactor.

Its subcellular location is the cytoplasm. It carries out the reaction RNA(n) + a ribonucleoside 5'-triphosphate = RNA(n+1) + diphosphate. DNA-dependent RNA polymerase (RNAP) catalyzes the transcription of DNA into RNA using the four ribonucleoside triphosphates as substrates. This subunit is involved in DNA promoter recognition. The sequence is that of DNA-directed RNA polymerase subunit Rpo2 from Saccharolobus shibatae (strain ATCC 51178 / DSM 5389 / JCM 8931 / NBRC 15437 / B12) (Sulfolobus shibatae).